The following is a 364-amino-acid chain: MGSSFGDLFRISTFGESHGGGVGVIVEGCPPRLELDLDEIQAELNRRKPGQSHITTPRKEADQVEILSGLLDGKTTLGTPIAMLVRNKDQRPGDYSDMAVAFRPSHADATYQSKYGIQARSGGGRASARETIGRVAAGAIAKQLLRKAAGTEILAWVKQIHTIEAHGIDPSTVSMNDIEANIVRCPEASVANQMIERIEAIGREGDSCGGVIECVVRQPAVGLGMPVFDKLEADLAKAVMSLPATKGFEIGSGFSGTLLKGSEHNDAFIPGDDGRLHTATNNSGGIQGGISNGEPIVIRVGFKPTATIRKEQQTIDSDGNATTLAAKGRHDPCVLPRAVPMVEAMVALTLADHLLRQQGQCSLW.

Arg47 contributes to the NADP(+) binding site. FMN is bound by residues 125 to 127 (RAS), Gly288, 303 to 307 (KPTAT), and Arg329.

Belongs to the chorismate synthase family. Homotetramer. FMNH2 serves as cofactor.

It catalyses the reaction 5-O-(1-carboxyvinyl)-3-phosphoshikimate = chorismate + phosphate. Its pathway is metabolic intermediate biosynthesis; chorismate biosynthesis; chorismate from D-erythrose 4-phosphate and phosphoenolpyruvate: step 7/7. In terms of biological role, catalyzes the anti-1,4-elimination of the C-3 phosphate and the C-6 proR hydrogen from 5-enolpyruvylshikimate-3-phosphate (EPSP) to yield chorismate, which is the branch point compound that serves as the starting substrate for the three terminal pathways of aromatic amino acid biosynthesis. This reaction introduces a second double bond into the aromatic ring system. The chain is Chorismate synthase from Synechococcus sp. (strain CC9902).